The primary structure comprises 475 residues: ATP synthase subunit beta, chloroplastic (475 aa).

Residue 155-162 participates in ATP binding; it reads GGAGVGKT.

The protein belongs to the ATPase alpha/beta chains family. In terms of assembly, F-type ATPases have 2 components, CF(1) - the catalytic core - and CF(0) - the membrane proton channel. CF(1) has five subunits: alpha(3), beta(3), gamma(1), delta(1), epsilon(1). CF(0) has four main subunits: a(1), b(1), b'(1) and c(9-12).

The protein resides in the plastid. It is found in the chloroplast thylakoid membrane. The enzyme catalyses ATP + H2O + 4 H(+)(in) = ADP + phosphate + 5 H(+)(out). Its function is as follows. Produces ATP from ADP in the presence of a proton gradient across the membrane. The catalytic sites are hosted primarily by the beta subunits. This Guillardia theta (Cryptophyte) protein is ATP synthase subunit beta, chloroplastic.